The chain runs to 494 residues: Probable cytosol aminopeptidase (494 aa).

2 residues coordinate Mn(2+): Lys260 and Asp265. The active site involves Lys272. Asp283, Asp342, and Glu344 together coordinate Mn(2+). Arg346 is an active-site residue.

Belongs to the peptidase M17 family. The cofactor is Mn(2+).

Its subcellular location is the cytoplasm. The catalysed reaction is Release of an N-terminal amino acid, Xaa-|-Yaa-, in which Xaa is preferably Leu, but may be other amino acids including Pro although not Arg or Lys, and Yaa may be Pro. Amino acid amides and methyl esters are also readily hydrolyzed, but rates on arylamides are exceedingly low.. It carries out the reaction Release of an N-terminal amino acid, preferentially leucine, but not glutamic or aspartic acids.. In terms of biological role, presumably involved in the processing and regular turnover of intracellular proteins. Catalyzes the removal of unsubstituted N-terminal amino acids from various peptides. This is Probable cytosol aminopeptidase from Bacillus thuringiensis subsp. konkukian (strain 97-27).